A 293-amino-acid chain; its full sequence is Protease HtpX (293 aa).

2 helical membrane passes run 4 to 24 (IALF…VLSL) and 34 to 54 (GLMI…LLMS). His139 contributes to the Zn(2+) binding site. Glu140 is an active-site residue. Position 143 (His143) interacts with Zn(2+). 2 consecutive transmembrane segments (helical) span residues 158 to 178 (VVNT…AGFM) and 193 to 213 (LIYF…ASII). Residue Glu222 coordinates Zn(2+).

This sequence belongs to the peptidase M48B family. Zn(2+) is required as a cofactor.

It is found in the cell inner membrane. This Escherichia coli (strain ATCC 8739 / DSM 1576 / NBRC 3972 / NCIMB 8545 / WDCM 00012 / Crooks) protein is Protease HtpX.